The primary structure comprises 378 residues: Chorismate synthase (378 aa).

Residues 37–60 (EEEIQKDLTRRRPGQNDLTTPRDE) are disordered. R47 contributes to the NADP(+) binding site. Residues 124–126 (RSS), G289, 304–308 (KPTST), and R330 each bind FMN.

The protein belongs to the chorismate synthase family. As to quaternary structure, homotetramer. Requires FMNH2 as cofactor.

It catalyses the reaction 5-O-(1-carboxyvinyl)-3-phosphoshikimate = chorismate + phosphate. The protein operates within metabolic intermediate biosynthesis; chorismate biosynthesis; chorismate from D-erythrose 4-phosphate and phosphoenolpyruvate: step 7/7. Catalyzes the anti-1,4-elimination of the C-3 phosphate and the C-6 proR hydrogen from 5-enolpyruvylshikimate-3-phosphate (EPSP) to yield chorismate, which is the branch point compound that serves as the starting substrate for the three terminal pathways of aromatic amino acid biosynthesis. This reaction introduces a second double bond into the aromatic ring system. This is Chorismate synthase from Leptospira biflexa serovar Patoc (strain Patoc 1 / Ames).